Consider the following 656-residue polypeptide: Threonine--tRNA ligase (656 aa).

The region spanning 2-67 (LMSQITIILP…KDQTKVALVT (66 aa)) is the TGS domain. The segment at 251–542 (DHRKLGKELG…YLEHTAGHLP (292 aa)) is catalytic. Zn(2+) is bound by residues cysteine 342, histidine 393, and histidine 519.

The protein belongs to the class-II aminoacyl-tRNA synthetase family. In terms of assembly, homodimer. Zn(2+) is required as a cofactor.

It localises to the cytoplasm. It catalyses the reaction tRNA(Thr) + L-threonine + ATP = L-threonyl-tRNA(Thr) + AMP + diphosphate + H(+). Its function is as follows. Catalyzes the attachment of threonine to tRNA(Thr) in a two-step reaction: L-threonine is first activated by ATP to form Thr-AMP and then transferred to the acceptor end of tRNA(Thr). Also edits incorrectly charged L-seryl-tRNA(Thr). This Bdellovibrio bacteriovorus (strain ATCC 15356 / DSM 50701 / NCIMB 9529 / HD100) protein is Threonine--tRNA ligase.